We begin with the raw amino-acid sequence, 303 residues long: Acetylglutamate kinase (303 aa).

Substrate contacts are provided by residues 73-74 (GG), arginine 95, and asparagine 194.

Belongs to the acetylglutamate kinase family. ArgB subfamily.

It localises to the cytoplasm. It carries out the reaction N-acetyl-L-glutamate + ATP = N-acetyl-L-glutamyl 5-phosphate + ADP. The protein operates within amino-acid biosynthesis; L-arginine biosynthesis; N(2)-acetyl-L-ornithine from L-glutamate: step 2/4. Its function is as follows. Catalyzes the ATP-dependent phosphorylation of N-acetyl-L-glutamate. The polypeptide is Acetylglutamate kinase (Saccharopolyspora erythraea (strain ATCC 11635 / DSM 40517 / JCM 4748 / NBRC 13426 / NCIMB 8594 / NRRL 2338)).